The primary structure comprises 347 residues: N-acetyl-gamma-glutamyl-phosphate reductase (347 aa).

Residue Cys151 is part of the active site.

It belongs to the NAGSA dehydrogenase family. Type 1 subfamily.

Its subcellular location is the cytoplasm. It catalyses the reaction N-acetyl-L-glutamate 5-semialdehyde + phosphate + NADP(+) = N-acetyl-L-glutamyl 5-phosphate + NADPH + H(+). It functions in the pathway amino-acid biosynthesis; L-arginine biosynthesis; N(2)-acetyl-L-ornithine from L-glutamate: step 3/4. Functionally, catalyzes the NADPH-dependent reduction of N-acetyl-5-glutamyl phosphate to yield N-acetyl-L-glutamate 5-semialdehyde. The polypeptide is N-acetyl-gamma-glutamyl-phosphate reductase (Corynebacterium aurimucosum (strain ATCC 700975 / DSM 44827 / CIP 107346 / CN-1) (Corynebacterium nigricans)).